Reading from the N-terminus, the 499-residue chain is Probable cytosol aminopeptidase (499 aa).

Mn(2+)-binding residues include Lys263 and Asp268. The active site involves Lys275. The Mn(2+) site is built by Asp286, Asp345, and Glu347. Arg349 is an active-site residue.

Belongs to the peptidase M17 family. The cofactor is Mn(2+).

Its subcellular location is the cytoplasm. The enzyme catalyses Release of an N-terminal amino acid, Xaa-|-Yaa-, in which Xaa is preferably Leu, but may be other amino acids including Pro although not Arg or Lys, and Yaa may be Pro. Amino acid amides and methyl esters are also readily hydrolyzed, but rates on arylamides are exceedingly low.. It carries out the reaction Release of an N-terminal amino acid, preferentially leucine, but not glutamic or aspartic acids.. Functionally, presumably involved in the processing and regular turnover of intracellular proteins. Catalyzes the removal of unsubstituted N-terminal amino acids from various peptides. The sequence is that of Probable cytosol aminopeptidase from Chlamydia trachomatis serovar L2 (strain ATCC VR-902B / DSM 19102 / 434/Bu).